The chain runs to 142 residues: UPF0102 protein Synpcc7942_0312 (142 aa).

The protein belongs to the UPF0102 family.

In Synechococcus elongatus (strain ATCC 33912 / PCC 7942 / FACHB-805) (Anacystis nidulans R2), this protein is UPF0102 protein Synpcc7942_0312.